Consider the following 168-residue polypeptide: MIMIKIGQGIDVHAFHNNGQQQQYVVLAGVPIDHTHSLLAHSDGDVVLHALADALLGALALGDIGQHFPDTDAANAGLDSRVLLRYVYGKVLAAGYILGNADITVMCERPKLAPHNLAMRANIASDLQTDVSNISVKATTTEKLGFTGRQEGIMANAVVLLVPNASGV.

Positions 11 and 13 each coordinate a divalent metal cation. Residues 11–13 (DVH) and 41–42 (HS) contribute to the 4-CDP-2-C-methyl-D-erythritol 2-phosphate site. His-49 is an a divalent metal cation binding site. 4-CDP-2-C-methyl-D-erythritol 2-phosphate contacts are provided by residues 63–65 (DIG), 68–72 (FPDTD), 139–142 (TTTE), Phe-146, and Arg-149.

This sequence belongs to the IspF family. In terms of assembly, homotrimer. Requires a divalent metal cation as cofactor.

It catalyses the reaction 4-CDP-2-C-methyl-D-erythritol 2-phosphate = 2-C-methyl-D-erythritol 2,4-cyclic diphosphate + CMP. It functions in the pathway isoprenoid biosynthesis; isopentenyl diphosphate biosynthesis via DXP pathway; isopentenyl diphosphate from 1-deoxy-D-xylulose 5-phosphate: step 4/6. Functionally, involved in the biosynthesis of isopentenyl diphosphate (IPP) and dimethylallyl diphosphate (DMAPP), two major building blocks of isoprenoid compounds. Catalyzes the conversion of 4-diphosphocytidyl-2-C-methyl-D-erythritol 2-phosphate (CDP-ME2P) to 2-C-methyl-D-erythritol 2,4-cyclodiphosphate (ME-CPP) with a corresponding release of cytidine 5-monophosphate (CMP). The protein is 2-C-methyl-D-erythritol 2,4-cyclodiphosphate synthase of Psychrobacter cryohalolentis (strain ATCC BAA-1226 / DSM 17306 / VKM B-2378 / K5).